The primary structure comprises 412 residues: Ornithine cyclodeaminase (412 aa).

NAD(+) contacts are provided by asparagine 237, alanine 238, aspartate 316, threonine 348, methionine 349, leucine 350, histidine 351, aspartate 369, aspartate 392, and valine 393.

This sequence belongs to the AgrE/ArgZ ornithine cyclodeaminase family. NAD(+) is required as a cofactor.

The catalysed reaction is L-ornithine = L-proline + NH4(+). Catalyzes the conversion of ornithine to proline, with the release of ammonia. The polypeptide is Ornithine cyclodeaminase (Methanopyrus kandleri (strain AV19 / DSM 6324 / JCM 9639 / NBRC 100938)).